The following is a 156-amino-acid chain: 6,7-dimethyl-8-ribityllumazine synthase (156 aa).

Residues F22, 57 to 59, and 81 to 83 each bind 5-amino-6-(D-ribitylamino)uracil; these read AYE and TVI. 86-87 provides a ligand contact to (2S)-2-hydroxy-3-oxobutyl phosphate; the sequence is GT. H89 serves as the catalytic Proton donor. F114 contributes to the 5-amino-6-(D-ribitylamino)uracil binding site. R128 serves as a coordination point for (2S)-2-hydroxy-3-oxobutyl phosphate.

The protein belongs to the DMRL synthase family. In terms of assembly, forms an icosahedral capsid composed of 60 subunits, arranged as a dodecamer of pentamers.

It catalyses the reaction (2S)-2-hydroxy-3-oxobutyl phosphate + 5-amino-6-(D-ribitylamino)uracil = 6,7-dimethyl-8-(1-D-ribityl)lumazine + phosphate + 2 H2O + H(+). It participates in cofactor biosynthesis; riboflavin biosynthesis; riboflavin from 2-hydroxy-3-oxobutyl phosphate and 5-amino-6-(D-ribitylamino)uracil: step 1/2. Functionally, catalyzes the formation of 6,7-dimethyl-8-ribityllumazine by condensation of 5-amino-6-(D-ribitylamino)uracil with 3,4-dihydroxy-2-butanone 4-phosphate. This is the penultimate step in the biosynthesis of riboflavin. The sequence is that of 6,7-dimethyl-8-ribityllumazine synthase from Salmonella heidelberg (strain SL476).